We begin with the raw amino-acid sequence, 491 residues long: Probable malate:quinone oxidoreductase (491 aa).

This sequence belongs to the MQO family. Requires FAD as cofactor.

The enzyme catalyses (S)-malate + a quinone = a quinol + oxaloacetate. Its pathway is carbohydrate metabolism; tricarboxylic acid cycle; oxaloacetate from (S)-malate (quinone route): step 1/1. This is Probable malate:quinone oxidoreductase from Leifsonia xyli subsp. xyli (strain CTCB07).